The primary structure comprises 114 residues: Nucleoid-associated protein NT01CX_0824 (114 aa).

Belongs to the YbaB/EbfC family. In terms of assembly, homodimer.

It localises to the cytoplasm. It is found in the nucleoid. In terms of biological role, binds to DNA and alters its conformation. May be involved in regulation of gene expression, nucleoid organization and DNA protection. This chain is Nucleoid-associated protein NT01CX_0824, found in Clostridium novyi (strain NT).